Here is a 354-residue protein sequence, read N- to C-terminus: MTELKNDRYLRALQRQPVDVTPVWMMRQAGRYLPEYKATRAQAGDFMSLCKNAELACEVTLQPLRRYPLDAAILFSDILTIPDAMGLGLYFEAGEGPRFTSPITGKADVEKLPVPDPEQELGYVMNAVRTIRRELKGEVPLIGFSGSPWTLATYMVEGGSSKAFTVIKKMMYAESQTLHLLLDKLAKSVTLYLNAQIRAGAQSVMIFDTWGGVLTGRDYQQFSLYYMHKIVDGLLRENEGRRVPVTLFTKGGGQWLEAIAETGCDALGLDWTTDIADARRRVGHKVALQGNMDPSMLYASPARIEEEVASILAGFGNGEGHVFNLGHGIHQDVPPEHAGAFVEAVHRLSAPYHL.

Residues 27 to 31, Asp-77, Tyr-154, Thr-209, and His-327 each bind substrate; that span reads RQAGR.

The protein belongs to the uroporphyrinogen decarboxylase family. Homodimer.

Its subcellular location is the cytoplasm. It catalyses the reaction uroporphyrinogen III + 4 H(+) = coproporphyrinogen III + 4 CO2. The protein operates within porphyrin-containing compound metabolism; protoporphyrin-IX biosynthesis; coproporphyrinogen-III from 5-aminolevulinate: step 4/4. Functionally, catalyzes the decarboxylation of four acetate groups of uroporphyrinogen-III to yield coproporphyrinogen-III. This is Uroporphyrinogen decarboxylase from Cronobacter sakazakii (strain ATCC BAA-894) (Enterobacter sakazakii).